We begin with the raw amino-acid sequence, 593 residues long: Actin-histidine N-methyltransferase (593 aa).

The segment at Met-1 to Ser-21 is disordered. Residues Arg-75, Glu-104–Phe-106, Arg-254, Asp-275–His-279, and Ser-325–Phe-327 contribute to the S-adenosyl-L-methionine site. Residues Glu-94–Gly-314 form the SET domain. The tract at residues Gly-549–Glu-593 is disordered. Residues Gly-553 to Lys-562 show a composition bias toward polar residues. The span at Ser-563 to Glu-593 shows a compositional bias: basic and acidic residues.

This sequence belongs to the class V-like SAM-binding methyltransferase superfamily. SETD3 actin-histidine methyltransferase family.

The protein localises to the cytoplasm. It catalyses the reaction L-histidyl-[protein] + S-adenosyl-L-methionine = N(tele)-methyl-L-histidyl-[protein] + S-adenosyl-L-homocysteine + H(+). Its function is as follows. Protein-histidine N-methyltransferase that specifically mediates 3-methylhistidine (tele-methylhistidine) methylation of actin at 'His-73'. Does not have protein-lysine N-methyltransferase activity and probably only catalyzes histidine methylation of actin. This chain is Actin-histidine N-methyltransferase, found in Gallus gallus (Chicken).